The primary structure comprises 258 residues: UPF0246 protein YaaA (258 aa).

Belongs to the UPF0246 family.

The sequence is that of UPF0246 protein YaaA from Escherichia coli O127:H6 (strain E2348/69 / EPEC).